The primary structure comprises 460 residues: L-seryl-tRNA(Sec) selenium transferase (460 aa).

Lys-293 carries the post-translational modification N6-(pyridoxal phosphate)lysine.

It belongs to the SelA family. The cofactor is pyridoxal 5'-phosphate.

It is found in the cytoplasm. It catalyses the reaction L-seryl-tRNA(Sec) + selenophosphate + H(+) = L-selenocysteinyl-tRNA(Sec) + phosphate. Its pathway is aminoacyl-tRNA biosynthesis; selenocysteinyl-tRNA(Sec) biosynthesis; selenocysteinyl-tRNA(Sec) from L-seryl-tRNA(Sec) (bacterial route): step 1/1. In terms of biological role, converts seryl-tRNA(Sec) to selenocysteinyl-tRNA(Sec) required for selenoprotein biosynthesis. This Pasteurella multocida (strain Pm70) protein is L-seryl-tRNA(Sec) selenium transferase.